A 34-amino-acid chain; its full sequence is Photosystem II reaction center protein M (34 aa).

Residues 5–25 (ILAFIATALFILIPTSFLLII) form a helical membrane-spanning segment.

This sequence belongs to the PsbM family. In terms of assembly, PSII is composed of 1 copy each of membrane proteins PsbA, PsbB, PsbC, PsbD, PsbE, PsbF, PsbH, PsbI, PsbJ, PsbK, PsbL, PsbM, PsbT, PsbX, PsbY, PsbZ, Psb30/Ycf12, at least 3 peripheral proteins of the oxygen-evolving complex and a large number of cofactors. It forms dimeric complexes. Detected in both etioplasts and green leaves; PSII is only assembled in green leaves.

The protein resides in the plastid. Its subcellular location is the chloroplast thylakoid membrane. One of the components of the core complex of photosystem II (PSII). PSII is a light-driven water:plastoquinone oxidoreductase that uses light energy to abstract electrons from H(2)O, generating O(2) and a proton gradient subsequently used for ATP formation. It consists of a core antenna complex that captures photons, and an electron transfer chain that converts photonic excitation into a charge separation. This subunit is found at the monomer-monomer interface. The chain is Photosystem II reaction center protein M from Hordeum vulgare (Barley).